Here is a 584-residue protein sequence, read N- to C-terminus: Glutathione hydrolase proenzyme (584 aa).

Residues 1-25 form the signal peptide; that stretch reads MAPAAMNLLCTVLYLLSSFAQVSDA. Asn111 is a glycosylation site (N-linked (GlcNAc...) asparagine). Arg120 serves as a coordination point for L-glutamate. Residues Asn135, Asn262, Asn272, Asn350, and Asn370 are each glycosylated (N-linked (GlcNAc...) asparagine). Residue Thr395 is the Nucleophile of the active site. L-glutamate contacts are provided by residues Thr413, Glu434, and 465-466; that span reads SS. An N-linked (GlcNAc...) asparagine glycan is attached at Asn547.

It belongs to the gamma-glutamyltransferase family. As to quaternary structure, heterodimer composed of the light and heavy chains. The active site is located in the light chain. Post-translationally, cleaved by autocatalysis into a large and a small subunit and the autocatalytic cleavage is essential to the functional activation of the enzyme.

Its subcellular location is the secreted. The enzyme catalyses an N-terminal (5-L-glutamyl)-[peptide] + an alpha-amino acid = 5-L-glutamyl amino acid + an N-terminal L-alpha-aminoacyl-[peptide]. It carries out the reaction glutathione + H2O = L-cysteinylglycine + L-glutamate. It catalyses the reaction an S-substituted glutathione + H2O = an S-substituted L-cysteinylglycine + L-glutamate. The catalysed reaction is leukotriene C4 + H2O = leukotriene D4 + L-glutamate. It participates in sulfur metabolism; glutathione metabolism. In terms of biological role, cleaves the gamma-glutamyl bond of extracellular glutathione (gamma-Glu-Cys-Gly), glutathione conjugates, and other gamma-glutamyl compounds. The metabolism of glutathione releases free glutamate and the dipeptide cysteinyl-glycine, which is hydrolyzed to cysteine and glycine by dipeptidases. In the presence of high concentrations of dipeptides and some amino acids, can also catalyze a transpeptidation reaction, transferring the gamma-glutamyl moiety to an acceptor amino acid to form a new gamma-glutamyl compound. Initiates extracellular glutathione (GSH) breakdown, provides cells with a local cysteine supply and contributes to maintain intracellular GSH level. It is part of the cell antioxidant defense mechanism. The protein is Glutathione hydrolase proenzyme of Arthroderma benhamiae (strain ATCC MYA-4681 / CBS 112371) (Trichophyton mentagrophytes).